A 436-amino-acid chain; its full sequence is UPF0597 protein YhaM (436 aa).

Belongs to the UPF0597 family.

The sequence is that of UPF0597 protein YhaM from Escherichia coli O6:H1 (strain CFT073 / ATCC 700928 / UPEC).